We begin with the raw amino-acid sequence, 222 residues long: Putative N-acetylmannosamine-6-phosphate 2-epimerase (222 aa).

Belongs to the NanE family.

The enzyme catalyses an N-acyl-D-glucosamine 6-phosphate = an N-acyl-D-mannosamine 6-phosphate. Its pathway is amino-sugar metabolism; N-acetylneuraminate degradation; D-fructose 6-phosphate from N-acetylneuraminate: step 3/5. Its function is as follows. Converts N-acetylmannosamine-6-phosphate (ManNAc-6-P) to N-acetylglucosamine-6-phosphate (GlcNAc-6-P). The polypeptide is Putative N-acetylmannosamine-6-phosphate 2-epimerase (Oceanobacillus iheyensis (strain DSM 14371 / CIP 107618 / JCM 11309 / KCTC 3954 / HTE831)).